Consider the following 158-residue polypeptide: 2-C-methyl-D-erythritol 2,4-cyclodiphosphate synthase (158 aa).

A divalent metal cation-binding residues include D9 and H11. 4-CDP-2-C-methyl-D-erythritol 2-phosphate contacts are provided by residues 9–11 (DVH) and 35–36 (HS). Residue H43 participates in a divalent metal cation binding. Residues 57-59 (DIG), 62-66 (FPDTD), 101-107 (AQKPKMA), 133-136 (TTTE), F140, and R143 contribute to the 4-CDP-2-C-methyl-D-erythritol 2-phosphate site.

The protein belongs to the IspF family. Homotrimer. A divalent metal cation is required as a cofactor.

It carries out the reaction 4-CDP-2-C-methyl-D-erythritol 2-phosphate = 2-C-methyl-D-erythritol 2,4-cyclic diphosphate + CMP. It participates in isoprenoid biosynthesis; isopentenyl diphosphate biosynthesis via DXP pathway; isopentenyl diphosphate from 1-deoxy-D-xylulose 5-phosphate: step 4/6. In terms of biological role, involved in the biosynthesis of isopentenyl diphosphate (IPP) and dimethylallyl diphosphate (DMAPP), two major building blocks of isoprenoid compounds. Catalyzes the conversion of 4-diphosphocytidyl-2-C-methyl-D-erythritol 2-phosphate (CDP-ME2P) to 2-C-methyl-D-erythritol 2,4-cyclodiphosphate (ME-CPP) with a corresponding release of cytidine 5-monophosphate (CMP). This is 2-C-methyl-D-erythritol 2,4-cyclodiphosphate synthase from Bacillus licheniformis (strain ATCC 14580 / DSM 13 / JCM 2505 / CCUG 7422 / NBRC 12200 / NCIMB 9375 / NCTC 10341 / NRRL NRS-1264 / Gibson 46).